Reading from the N-terminus, the 89-residue chain is Large ribosomal subunit protein bL27 (89 aa).

The segment at 1-20 is disordered; the sequence is MAHKKAGGSSRNGRDSIGRR.

Belongs to the bacterial ribosomal protein bL27 family.

This chain is Large ribosomal subunit protein bL27, found in Ruegeria pomeroyi (strain ATCC 700808 / DSM 15171 / DSS-3) (Silicibacter pomeroyi).